Here is a 368-residue protein sequence, read N- to C-terminus: tRNA-specific 2-thiouridylase MnmA (368 aa).

Residues 11-18 (GMSGGVDS) and Met-37 contribute to the ATP site. The segment at 97–99 (NPD) is interaction with target base in tRNA. The active-site Nucleophile is Cys-102. Cysteines 102 and 199 form a disulfide. Gly-127 lines the ATP pocket. The tract at residues 149-151 (KDQ) is interaction with tRNA. Residue Cys-199 is the Cysteine persulfide intermediate of the active site. The tract at residues 311-312 (RY) is interaction with tRNA.

Belongs to the MnmA/TRMU family. In terms of assembly, interacts with TusE.

Its subcellular location is the cytoplasm. It catalyses the reaction S-sulfanyl-L-cysteinyl-[protein] + uridine(34) in tRNA + AH2 + ATP = 2-thiouridine(34) in tRNA + L-cysteinyl-[protein] + A + AMP + diphosphate + H(+). Its function is as follows. Catalyzes the 2-thiolation of uridine at the wobble position (U34) of tRNA(Lys), tRNA(Glu) and tRNA(Gln), leading to the formation of s(2)U34, the first step of tRNA-mnm(5)s(2)U34 synthesis. Sulfur is provided by IscS, via a sulfur-relay system. Binds ATP and its substrate tRNAs. The polypeptide is tRNA-specific 2-thiouridylase MnmA (Citrobacter koseri (strain ATCC BAA-895 / CDC 4225-83 / SGSC4696)).